A 367-amino-acid chain; its full sequence is Phospho-N-acetylmuramoyl-pentapeptide-transferase (367 aa).

10 consecutive transmembrane segments (helical) span residues 27–47, 73–93, 97–117, 132–152, 167–187, 200–220, 237–257, 264–284, 289–309, and 344–364; these read VLAA…VIRW, TMGG…WGDL, YVWT…YDDW, WKFF…AFSA, TMAY…VIVG, GLAI…AYVT, AGEL…FLWF, VFMG…VAVI, IVLL…MLQV, and QVVV…LSTL.

It belongs to the glycosyltransferase 4 family. MraY subfamily. Mg(2+) serves as cofactor.

It is found in the cell inner membrane. It catalyses the reaction UDP-N-acetyl-alpha-D-muramoyl-L-alanyl-gamma-D-glutamyl-meso-2,6-diaminopimeloyl-D-alanyl-D-alanine + di-trans,octa-cis-undecaprenyl phosphate = di-trans,octa-cis-undecaprenyl diphospho-N-acetyl-alpha-D-muramoyl-L-alanyl-D-glutamyl-meso-2,6-diaminopimeloyl-D-alanyl-D-alanine + UMP. It functions in the pathway cell wall biogenesis; peptidoglycan biosynthesis. Catalyzes the initial step of the lipid cycle reactions in the biosynthesis of the cell wall peptidoglycan: transfers peptidoglycan precursor phospho-MurNAc-pentapeptide from UDP-MurNAc-pentapeptide onto the lipid carrier undecaprenyl phosphate, yielding undecaprenyl-pyrophosphoryl-MurNAc-pentapeptide, known as lipid I. This Dechloromonas aromatica (strain RCB) protein is Phospho-N-acetylmuramoyl-pentapeptide-transferase.